Reading from the N-terminus, the 124-residue chain is MPTIQQLIRTERSRLKVKTKSPALKSCPERRGVCTRVYTSTPKKPNSALRKVARVRLTSGFEVTAYIGGIGHNLQEHSVVLIRGGRVKDLPGVRYHIIRGTLDTSGVKDRRQSRSKYGAKAPKE.

Asp89 bears the 3-methylthioaspartic acid mark. The interval 101-124 (TLDTSGVKDRRQSRSKYGAKAPKE) is disordered.

It belongs to the universal ribosomal protein uS12 family. As to quaternary structure, part of the 30S ribosomal subunit. Contacts proteins S8 and S17. May interact with IF1 in the 30S initiation complex.

Its function is as follows. With S4 and S5 plays an important role in translational accuracy. Functionally, interacts with and stabilizes bases of the 16S rRNA that are involved in tRNA selection in the A site and with the mRNA backbone. Located at the interface of the 30S and 50S subunits, it traverses the body of the 30S subunit contacting proteins on the other side and probably holding the rRNA structure together. The combined cluster of proteins S8, S12 and S17 appears to hold together the shoulder and platform of the 30S subunit. The chain is Small ribosomal subunit protein uS12 from Synechococcus sp. (strain CC9902).